The following is a 107-amino-acid chain: Large ribosomal subunit protein uL24 (107 aa).

The protein belongs to the universal ribosomal protein uL24 family. In terms of assembly, part of the 50S ribosomal subunit.

One of two assembly initiator proteins, it binds directly to the 5'-end of the 23S rRNA, where it nucleates assembly of the 50S subunit. Its function is as follows. One of the proteins that surrounds the polypeptide exit tunnel on the outside of the subunit. The polypeptide is Large ribosomal subunit protein uL24 (Coxiella burnetii (strain Dugway 5J108-111)).